Here is a 362-residue protein sequence, read N- to C-terminus: Holliday junction branch migration complex subunit RuvB (362 aa).

The disordered stretch occupies residues 1–20; the sequence is MKRTIMTNTDTFEQPNTGAN. Positions 15–203 are large ATPase domain (RuvB-L); sequence PNTGANEESL…FGFTAHLDFY (189 aa). Residues L42, R43, G84, K87, T88, T89, 150-152, R193, Y203, and R240 each bind ATP; that span reads EDF. T88 serves as a coordination point for Mg(2+). The segment at 204–274 is small ATPAse domain (RuvB-S); it reads PHEELEKLIE…DVKEALALYQ (71 aa). The tract at residues 277-362 is head domain (RuvB-H); sequence TEGLDRLDIA…ESAYDVNEMS (86 aa). DNA-binding residues include R332 and R337.

Belongs to the RuvB family. As to quaternary structure, homohexamer. Forms an RuvA(8)-RuvB(12)-Holliday junction (HJ) complex. HJ DNA is sandwiched between 2 RuvA tetramers; dsDNA enters through RuvA and exits via RuvB. An RuvB hexamer assembles on each DNA strand where it exits the tetramer. Each RuvB hexamer is contacted by two RuvA subunits (via domain III) on 2 adjacent RuvB subunits; this complex drives branch migration. In the full resolvosome a probable DNA-RuvA(4)-RuvB(12)-RuvC(2) complex forms which resolves the HJ.

The protein localises to the cytoplasm. It catalyses the reaction ATP + H2O = ADP + phosphate + H(+). In terms of biological role, the RuvA-RuvB-RuvC complex processes Holliday junction (HJ) DNA during genetic recombination and DNA repair, while the RuvA-RuvB complex plays an important role in the rescue of blocked DNA replication forks via replication fork reversal (RFR). RuvA specifically binds to HJ cruciform DNA, conferring on it an open structure. The RuvB hexamer acts as an ATP-dependent pump, pulling dsDNA into and through the RuvAB complex. RuvB forms 2 homohexamers on either side of HJ DNA bound by 1 or 2 RuvA tetramers; 4 subunits per hexamer contact DNA at a time. Coordinated motions by a converter formed by DNA-disengaged RuvB subunits stimulates ATP hydrolysis and nucleotide exchange. Immobilization of the converter enables RuvB to convert the ATP-contained energy into a lever motion, pulling 2 nucleotides of DNA out of the RuvA tetramer per ATP hydrolyzed, thus driving DNA branch migration. The RuvB motors rotate together with the DNA substrate, which together with the progressing nucleotide cycle form the mechanistic basis for DNA recombination by continuous HJ branch migration. Branch migration allows RuvC to scan DNA until it finds its consensus sequence, where it cleaves and resolves cruciform DNA. The protein is Holliday junction branch migration complex subunit RuvB of Bifidobacterium adolescentis (strain ATCC 15703 / DSM 20083 / NCTC 11814 / E194a).